A 378-amino-acid chain; its full sequence is O-methyltransferase dpfgI (378 aa).

Residues 232–233, Asp257, 279–280, and Arg295 each bind S-adenosyl-L-methionine; these read GG and NF. The active-site Proton acceptor is His299.

It belongs to the class I-like SAM-binding methyltransferase superfamily. Cation-independent O-methyltransferase family.

It functions in the pathway secondary metabolite biosynthesis; terpenoid biosynthesis. Functionally, O-methyltransferase; part of the gene cluster that mediates the biosynthesis of diterpenoid pyrones. The first step of the pathway is the synthesis of the alpha-pyrone moiety by the polyketide synthase dpfgA via condensation of one acetyl-CoA starter unit with 3 malonyl-CoA units and 2 methylations. The alpha-pyrone is then combined with geranylgeranyl pyrophosphate (GGPP) formed by the GGPP synthase dpfgD through the action of the prenyltransferase dpfgC to yield a linear alpha-pyrone diterpenoid. Subsequent steps in the diterpenoid pyrone biosynthetic pathway involve the decalin core formation, which is initiated by the epoxidation of the C10-C11 olefin by the FAD-dependent oxidoreductase dpfgE, and is followed by a cyclization cascade catalyzed by the terpene cyclase dpfgB. The short chain dehydrogenase/reductase dpfgG then oxidizes the 8S hydroxy group to a ketone and the short chain dehydrogenase/reductase dpfgH reduces the ketone to the 8R hydroxy group to yield higginsianin B. Higginsianin B is further methylated by the methyltransferase dpfgI to produce the intermediate named FDDP B. The cytochrome P450 monooxygenase dfgpJ then catalyzes a three-step oxidation at C-27 to generate a carboxylic acid as well as C-26 hydroxylation. Finally, methyltransferase dpfgK methylates the carboxylic acid generated by dpfgJ, yielding the final diterpenoid pyrones from the pathway which were named FDDP D and FDDP E. In Gibberella zeae (strain ATCC MYA-4620 / CBS 123657 / FGSC 9075 / NRRL 31084 / PH-1) (Wheat head blight fungus), this protein is O-methyltransferase dpfgI.